The sequence spans 335 residues: MAAAPPIEPAVTTTFPGFKFSPTDIELISYYLKRKMDGLERSVEIIPEVEIYNFEPWDLPDKSIVKSDSEWFFFCARGKKYPHGSQNRRATKIGYWKATGKERNVKSGSEVIGTKRTLVFHIGRAPKGGRTEWLMHEYCMIGVSLDALVICRLRRNTEFQGSTIQKPPQPSLPLDKHVNLRNEAISESIYGWETMVDFYLSSESGQELLSEIAESSQSSQNPQVPSEEDFYADILRDEIVKLDDPAVSGNTLINVPRLQTESNTTRVLPLPDMVDKQMQSLLQKLPLQNDTGEENNISMSNCFIGIYSIKSINRARWDVVVWLLVMIAVLVFYLV.

Residues threonine 14–asparagine 156 form the NAC domain. Residues isoleucine 112–serine 162 mediate DNA binding. The helical transmembrane segment at alanine 315–valine 335 threads the bilayer.

As to expression, expressed in roots, rosette leaves, cauline leaves, shoot apex, stems and flowers.

Its subcellular location is the membrane. It is found in the nucleus. In terms of biological role, transcriptional activator activated by proteolytic cleavage through regulated intramembrane proteolysis (RIP). Transcription factor involved in modulation of abscisic acid (ABA) signaling. Attenuates ABA sensitivity and glucose-induced ABA accumulation. Reduces the expression of ABI4 gene. The polypeptide is NAC domain-containing protein 60 (Arabidopsis thaliana (Mouse-ear cress)).